A 777-amino-acid polypeptide reads, in one-letter code: Hepatocyte growth factor-regulated tyrosine kinase substrate (777 aa).

Residues 15–143 (ATSQLLLETD…IMKVEGHVFP (129 aa)) form the VHS domain. The FYVE-type zinc-finger motif lies at 160–220 (WVDAEECHRC…VCEPCFEQLN (61 aa)). Zn(2+) is bound by residues Cys166, Cys169, Cys182, Cys185, Cys190, and Cys193. Lys207 is subject to N6-acetyllysine. Cys212 and Cys215 together coordinate Zn(2+). Residues 223-319 (AEGKAASTTE…SPVNSSAPLA (97 aa)) are disordered. An interaction with SNX1 region spans residues 225–541 (GKAASTTELP…QRLQEQEKER (317 aa)). Residues 258-277 (QEEEELQLALALSQSEAEEK) enclose the UIM domain. Residues 292-311 (AEPTPVASSAPPASSLYSSP) are compositionally biased toward low complexity. A phosphotyrosine mark is found at Tyr308, Tyr329, and Tyr334. The tract at residues 338-370 (KQEEARKSPTPSAPVPLTEPTAQPGEGHAIPAN) is disordered. The segment at 443-541 (SINTMHPQLL…QRLQEQEKER (99 aa)) is interaction with SNAP25 and TRAK2. The tract at residues 452 to 570 (LELLNQLDER…FSLPYAQLQA (119 aa)) is interaction with STAM. The tract at residues 478–777 (ARGALSALRE…GSEAQLISFD (300 aa)) is interaction with NF2. Residue Lys549 is modified to N6-succinyllysine. Residues 645-658 (AAAQGPAGPTTSPA) are compositionally biased toward low complexity. Disordered stretches follow at residues 645–698 (AAAQ…YMGS) and 712–777 (NLMP…ISFD). 2 stretches are compositionally biased toward polar residues: residues 659–698 (YSSYQPTPTQGYQTVASQAPQSLPAISQPPQSGTMGYMGS) and 730–739 (PYISGQQPVY). Residues 753–777 (PPVAQQPPAQGPPAQGSEAQLISFD) show a composition bias toward low complexity.

Component of the ESCRT-0 complex composed of STAM or STAM2 and HGS. Part of a complex at least composed of HSG, STAM2 (or probably STAM) and EPS15. Interacts with STAM. Interacts with STAM2. Interacts with EPS15; the interaction is direct, calcium-dependent and inhibited by SNAP25. Identified in a complex with STAM and LITAF. Found in a complex with STAM and E3 ligase ITCH and DTX3L. Interacts with E3 ligase DTX3L; the interaction brings together STAM and HSG, promotes their recruitment to early endosomes and decreases STAM and HGS ubiquitination by ITCH. Interacts with NF2; the interaction is direct. Interacts with ubiquitin; the interaction is direct. Interacts with VPS37C. Interacts with SMAD1, SMAD2 and SMAD3. Interacts with TSG101; the interaction mediates the association with the ESCRT-I complex. Interacts with SNAP25; the interaction is direct and decreases with addition of increasing concentrations of free calcium. Interacts with SNX1; the interaction is direct. Component of a 550 kDa membrane complex at least composed of HGS and SNX1 but excluding EGFR. Interacts with TRAK1. Interacts with TRAK2. Component of the CART complex, at least composed of ACTN4, HGS/HRS, MYO5B and TRIM3. Interacts (via UIM domain) with UBQLN1 (via ubiquitin-like domain). Interacts with ARRDC3. Identified in a complex containing at least ARRDC4, AVPR2 and HGS. Interacts with LAPTM4B; promotes HGS ubiquitination. Post-translationally, phosphorylated on Tyr-334. A minor site of phosphorylation on Tyr-329 is detected. Phosphorylation occurs in response to EGF, IL-2, GM-CSF and HGF. Ubiquitinated by ITCH.

It is found in the cytoplasm. Its subcellular location is the early endosome membrane. The protein localises to the endosome. The protein resides in the multivesicular body membrane. Involved in intracellular signal transduction mediated by cytokines and growth factors. When associated with STAM it suppresses DNA signaling upon stimulation by IL-2 and GM-CSF. Could be a direct effector of PI3-kinase in vesicular pathway via early endosomes and may regulate trafficking to early and late endosomes by recruiting clathrin. May concentrate ubiquitinated receptors within clathrin-coated regions. Involved in down-regulation of receptor tyrosine kinase via multivesicular body (MVBs) when complexed with STAM (ESCRT-0 complex). The ESCRT-0 complex binds ubiquitin and acts as a sorting machinery that recognizes ubiquitinated receptors and transfers them to further sequential lysosomal sorting/trafficking processes. May contribute to the efficient recruitment of SMADs to the activin receptor complex. Involved in receptor recycling via its association with the CART complex, a multiprotein complex required for efficient transferrin receptor recycling but not for EGFR degradation. This is Hepatocyte growth factor-regulated tyrosine kinase substrate (HGS) from Bos taurus (Bovine).